A 553-amino-acid chain; its full sequence is HTH-type transcriptional regulator SgrR (553 aa).

Positions 1–113 (MSTSRLQQQF…RQMLLSQLGR (113 aa)) constitute an HTH marR-type domain. The H-T-H motif DNA-binding region spans 26–49 (LQALAEVLNCSRRHVRSLLGKMQH). The tract at residues 163–494 (ELEPDLSHHW…EELHQDIESW (332 aa)) is solute-binding.

Its function is as follows. Activates the small RNA gene sgrS under glucose-phosphate stress conditions as well as yfdZ. Represses its own transcription under both stress and non-stress conditions. Might act as a sensor of the intracellular accumulation of phosphoglucose by binding these molecules in its C-terminal solute-binding domain. The protein is HTH-type transcriptional regulator SgrR of Yersinia pseudotuberculosis serotype I (strain IP32953).